A 381-amino-acid chain; its full sequence is MAIDPVILSQELISFPSITPTDNGAIDFLSNTLSQYGFTCNVLTFGNDEVQVCNLYAQLGNGHPNLCFAGHTDVVPTGDLEKWKFDPFSGHIEDNILYGRGAVDMKSAICAFIAAVSRIDFNQVNGAISLMISGDEEGNHFKYGTPAILKWLTDNNKKIDYCLVGEPTSKSSVGDTIKIGRRGSINFKIVCNGVQGHVAYPHLAQNPINDMINILHKINNTVLDEGNEYFQPSNCEITSVDVGNTANNVIPGTVTAHLNIRYNNIHTSESLFNIINNICAETTQKYQIFTSLSGDPFINYPDKYSDMLSAAIKKTTGETAVISTSGGTSDARFIKDFCPVIELGLKNDTAHKINENTSVDDINKLANIYEEFIKQFFNISQ.

Residue His71 coordinates Zn(2+). The active site involves Asp73. Asp104 contributes to the Zn(2+) binding site. Glu136 (proton acceptor) is an active-site residue. Glu137, Glu166, and His351 together coordinate Zn(2+).

This sequence belongs to the peptidase M20A family. DapE subfamily. As to quaternary structure, homodimer. Zn(2+) serves as cofactor. The cofactor is Co(2+).

It catalyses the reaction N-succinyl-(2S,6S)-2,6-diaminopimelate + H2O = (2S,6S)-2,6-diaminopimelate + succinate. It participates in amino-acid biosynthesis; L-lysine biosynthesis via DAP pathway; LL-2,6-diaminopimelate from (S)-tetrahydrodipicolinate (succinylase route): step 3/3. In terms of biological role, catalyzes the hydrolysis of N-succinyl-L,L-diaminopimelic acid (SDAP), forming succinate and LL-2,6-diaminopimelate (DAP), an intermediate involved in the bacterial biosynthesis of lysine and meso-diaminopimelic acid, an essential component of bacterial cell walls. This chain is Succinyl-diaminopimelate desuccinylase, found in Ehrlichia chaffeensis (strain ATCC CRL-10679 / Arkansas).